The chain runs to 233 residues: Antiholin-like protein LrgB (233 aa).

The next 6 membrane-spanning stretches (helical) occupy residues 5–25 (LGIN…VIAT), 33–53 (GFFL…FLKL), 63–83 (IGGD…AIPL), 97–117 (IFGG…LVAI), 152–172 (LTSL…AKIV), and 212–232 (IAVV…APIL).

This sequence belongs to the CidB/LrgB family. LrgB subfamily.

The protein resides in the cell membrane. Its function is as follows. Inhibits the expression or activity of extracellular murein hydrolases by interacting, possibly with LrgA, with the holin-like proteins CidA and/or CidB. The LrgAB and CidAB proteins may affect the proton motive force of the membrane. May be involved in programmed cell death (PCD), possibly triggering PCD in response to antibiotics and environmental stresses. This Staphylococcus epidermidis (strain ATCC 12228 / FDA PCI 1200) protein is Antiholin-like protein LrgB.